A 195-amino-acid chain; its full sequence is NADH-quinone oxidoreductase subunit B (195 aa).

4 residues coordinate [4Fe-4S] cluster: cysteine 74, cysteine 75, cysteine 139, and cysteine 169.

Belongs to the complex I 20 kDa subunit family. NDH-1 is composed of 14 different subunits. Subunits NuoB, C, D, E, F, and G constitute the peripheral sector of the complex. The cofactor is [4Fe-4S] cluster.

It is found in the cell inner membrane. The enzyme catalyses a quinone + NADH + 5 H(+)(in) = a quinol + NAD(+) + 4 H(+)(out). Its function is as follows. NDH-1 shuttles electrons from NADH, via FMN and iron-sulfur (Fe-S) centers, to quinones in the respiratory chain. The immediate electron acceptor for the enzyme in this species is believed to be ubiquinone. Couples the redox reaction to proton translocation (for every two electrons transferred, four hydrogen ions are translocated across the cytoplasmic membrane), and thus conserves the redox energy in a proton gradient. This Methylorubrum populi (strain ATCC BAA-705 / NCIMB 13946 / BJ001) (Methylobacterium populi) protein is NADH-quinone oxidoreductase subunit B.